The sequence spans 132 residues: Fumarate reductase subunit C (132 aa).

The next 3 membrane-spanning stretches (helical) occupy residues 36–56, 70–90, and 110–130; these read AIPT…LGSL, IVII…VTYY, and IITM…LVFM.

It belongs to the FrdC family. Part of an enzyme complex containing four subunits: a flavoprotein (FrdA), an iron-sulfur protein (FrdB), and two hydrophobic anchor proteins (FrdC and FrdD).

Its subcellular location is the cell inner membrane. Its function is as follows. Anchors the catalytic components of the fumarate reductase complex to the cell membrane, binds quinones. This chain is Fumarate reductase subunit C, found in Pasteurella multocida (strain Pm70).